Here is a 293-residue protein sequence, read N- to C-terminus: Exosome complex component RRP4 (293 aa).

Residues 79-159 (EVGDIVVGRI…SDGAVSLHTR (81 aa)) enclose the S1 motif domain. A Phosphoserine modification is found at S124.

It belongs to the RRP4 family. As to quaternary structure, component of the RNA exosome core complex (Exo-9), composed of EXOSC1, EXOSC2, EXOSC3, EXOSC4, EXOSC5, EXOSC6, EXOSC7, EXOSC8 and EXOSC9; within the complex interacts with EXOSC4 and EXOSC7. The catalytically inactive RNA exosome core complex (Exo-9) associates with the catalytic subunit EXOSC10/RRP6. Exo-9 may associate with DIS3 to form the nucleolar exosome complex, or DIS3L to form the cytoplasmic exosome complex. Exo-9 is formed by a hexameric base ring consisting of the heterodimers EXOSC4-EXOSC9, EXOSC5-EXOSC8 and EXOSC6-EXOSC7, and a cap ring consisting of EXOSC1, EXOSC2 and EXOSC3. The RNA exosome complex associates with cofactors C1D/RRP47, MPHOSPH6/MPP6 and MTREX/MTR4. Interacts with GTPBP1. Interacts with ZFP36L1 (via N-terminus).

The protein resides in the cytoplasm. It is found in the nucleus. The protein localises to the nucleolus. Functionally, non-catalytic component of the RNA exosome complex which has 3'-&gt;5' exoribonuclease activity and participates in a multitude of cellular RNA processing and degradation events. In the nucleus, the RNA exosome complex is involved in proper maturation of stable RNA species such as rRNA, snRNA and snoRNA, in the elimination of RNA processing by-products and non-coding 'pervasive' transcripts, such as antisense RNA species and promoter-upstream transcripts (PROMPTs), and of mRNAs with processing defects, thereby limiting or excluding their export to the cytoplasm. The RNA exosome may be involved in Ig class switch recombination (CSR) and/or Ig variable region somatic hypermutation (SHM) by targeting AICDA deamination activity to transcribed dsDNA substrates. In the cytoplasm, the RNA exosome complex is involved in general mRNA turnover and specifically degrades inherently unstable mRNAs containing AU-rich elements (AREs) within their 3' untranslated regions, and in RNA surveillance pathways, preventing translation of aberrant mRNAs. It seems to be involved in degradation of histone mRNA. The catalytic inactive RNA exosome core complex of 9 subunits (Exo-9) is proposed to play a pivotal role in the binding and presentation of RNA for ribonucleolysis, and to serve as a scaffold for the association with catalytic subunits and accessory proteins or complexes. EXOSC2 as peripheral part of the Exo-9 complex stabilizes the hexameric ring of RNase PH-domain subunits through contacts with EXOSC4 and EXOSC7. The protein is Exosome complex component RRP4 of Homo sapiens (Human).